A 67-amino-acid chain; its full sequence is Disintegrin EC3A (67 aa).

Residues 1 to 65 (NSVHPCCDPV…DCPRNRYKGK (65 aa)) enclose the Disintegrin domain. Intrachain disulfides connect Cys6–Cys29, Cys20–Cys26, Cys25–Cys50, and Cys38–Cys57. Positions 42–44 (VGD) match the Cell attachment site; atypical (VGD) motif.

It belongs to the venom metalloproteinase (M12B) family. P-II subfamily. P-IIe sub-subfamily. Heterodimer with EC3B; disulfide-linked. In terms of tissue distribution, expressed by the venom gland.

Its subcellular location is the secreted. In terms of biological role, inhibits adhesion of cells expressing alpha-4/beta-1 (ITGA4/ITGB1) and alpha-4/beta-7 (ITGA4/ITGB7) integrins to the natural ligands vascular cell adhesion molecule 1 (VCAM-1) and mucosal addressin cell adhesion molecule 1 (MADCAM-1). It is also a weaker inhibitor of alpha-5/beta-1 (ITGA5/ITGB1) and alpha-2b/beta-3 (ITGA2B/ITGB3) integrins. The inhibitory activity of EC3 towards alpha-4 integrins is associated with the MLD sequence of EC3B subunit. The ability of EC3 to inhibit ITGA5/ITGB1 resides in both subunits A and B. This chain is Disintegrin EC3A, found in Echis carinatus (Saw-scaled viper).